We begin with the raw amino-acid sequence, 157 residues long: S-ribosylhomocysteine lyase (157 aa).

Fe cation contacts are provided by His54, His58, and Cys126.

It belongs to the LuxS family. Homodimer. It depends on Fe cation as a cofactor.

The catalysed reaction is S-(5-deoxy-D-ribos-5-yl)-L-homocysteine = (S)-4,5-dihydroxypentane-2,3-dione + L-homocysteine. Functionally, involved in the synthesis of autoinducer 2 (AI-2) which is secreted by bacteria and is used to communicate both the cell density and the metabolic potential of the environment. The regulation of gene expression in response to changes in cell density is called quorum sensing. Catalyzes the transformation of S-ribosylhomocysteine (RHC) to homocysteine (HC) and 4,5-dihydroxy-2,3-pentadione (DPD). This chain is S-ribosylhomocysteine lyase, found in Bacillus velezensis (strain DSM 23117 / BGSC 10A6 / LMG 26770 / FZB42) (Bacillus amyloliquefaciens subsp. plantarum).